The primary structure comprises 149 residues: Large ribosomal subunit protein bL9 (149 aa).

It belongs to the bacterial ribosomal protein bL9 family.

Functionally, binds to the 23S rRNA. This Synechococcus sp. (strain JA-2-3B'a(2-13)) (Cyanobacteria bacterium Yellowstone B-Prime) protein is Large ribosomal subunit protein bL9.